Here is a 386-residue protein sequence, read N- to C-terminus: Succinate--CoA ligase [ADP-forming] subunit beta (386 aa).

4 residues coordinate ATP: Lys-46, Glu-99, Ala-102, and Glu-107. 2 residues coordinate Mg(2+): Asn-199 and Asp-213. Substrate contacts are provided by residues Asn-264 and 321 to 323 (GIM).

Belongs to the succinate/malate CoA ligase beta subunit family. In terms of assembly, heterotetramer of two alpha and two beta subunits. Mg(2+) is required as a cofactor.

The catalysed reaction is succinate + ATP + CoA = succinyl-CoA + ADP + phosphate. It catalyses the reaction GTP + succinate + CoA = succinyl-CoA + GDP + phosphate. It participates in carbohydrate metabolism; tricarboxylic acid cycle; succinate from succinyl-CoA (ligase route): step 1/1. Its function is as follows. Succinyl-CoA synthetase functions in the citric acid cycle (TCA), coupling the hydrolysis of succinyl-CoA to the synthesis of either ATP or GTP and thus represents the only step of substrate-level phosphorylation in the TCA. The beta subunit provides nucleotide specificity of the enzyme and binds the substrate succinate, while the binding sites for coenzyme A and phosphate are found in the alpha subunit. The sequence is that of Succinate--CoA ligase [ADP-forming] subunit beta from Orientia tsutsugamushi (strain Ikeda) (Rickettsia tsutsugamushi).